Consider the following 100-residue polypeptide: Urease subunit gamma (100 aa).

This sequence belongs to the urease gamma subunit family. Heterotrimer of UreA (gamma), UreB (beta) and UreC (alpha) subunits. Three heterotrimers associate to form the active enzyme.

Its subcellular location is the cytoplasm. It catalyses the reaction urea + 2 H2O + H(+) = hydrogencarbonate + 2 NH4(+). The protein operates within nitrogen metabolism; urea degradation; CO(2) and NH(3) from urea (urease route): step 1/1. This chain is Urease subunit gamma, found in Alcanivorax borkumensis (strain ATCC 700651 / DSM 11573 / NCIMB 13689 / SK2).